Here is a 196-residue protein sequence, read N- to C-terminus: Large ribosomal subunit protein bL25 (196 aa).

It belongs to the bacterial ribosomal protein bL25 family. CTC subfamily. As to quaternary structure, part of the 50S ribosomal subunit; part of the 5S rRNA/L5/L18/L25 subcomplex. Contacts the 5S rRNA. Binds to the 5S rRNA independently of L5 and L18.

This is one of the proteins that binds to the 5S RNA in the ribosome where it forms part of the central protuberance. In Treponema pallidum subsp. pallidum (strain SS14), this protein is Large ribosomal subunit protein bL25.